The chain runs to 1357 residues: DNA-directed RNA polymerase subunit beta (1357 aa).

This sequence belongs to the RNA polymerase beta chain family. The RNAP catalytic core consists of 2 alpha, 1 beta, 1 beta' and 1 omega subunit. When a sigma factor is associated with the core the holoenzyme is formed, which can initiate transcription.

The catalysed reaction is RNA(n) + a ribonucleoside 5'-triphosphate = RNA(n+1) + diphosphate. DNA-dependent RNA polymerase catalyzes the transcription of DNA into RNA using the four ribonucleoside triphosphates as substrates. The polypeptide is DNA-directed RNA polymerase subunit beta (Pseudomonas aeruginosa (strain UCBPP-PA14)).